Consider the following 251-residue polypeptide: Core protein VP8 (251 aa).

The propeptide at 1-32 (MSLLLENLIEEDTIFFAGSISEYDDLQMVIAG) is removed by core protease OPG083/I7.

This sequence belongs to the orthopoxvirus OPG098 family. Post-translationally, undergoes morphogenesis-associated proteolysis which cleaves the 28 kDa to a 25-kDa product. Proteolytic cleavage of major core proteins P4a (OPG136), P4b (OPG129), and VP8 (OPG098), which occurs at a late stage of core formation, is required for production of infectious mature virions (MV).

Its subcellular location is the virion. It is found in the host cytoplasm. Major core structural protein. This Vaccinia virus (strain Copenhagen) (VACV) protein is Core protein VP8 (OPG098).